We begin with the raw amino-acid sequence, 72 residues long: Translation initiation factor IF-1 1 (72 aa).

Residues 1–72 enclose the S1-like domain; it reads MSKDDVIQMQ…TRARIVFRSK (72 aa).

It belongs to the IF-1 family. Component of the 30S ribosomal translation pre-initiation complex which assembles on the 30S ribosome in the order IF-2 and IF-3, IF-1 and N-formylmethionyl-tRNA(fMet); mRNA recruitment can occur at any time during PIC assembly.

It localises to the cytoplasm. Functionally, one of the essential components for the initiation of protein synthesis. Stabilizes the binding of IF-2 and IF-3 on the 30S subunit to which N-formylmethionyl-tRNA(fMet) subsequently binds. Helps modulate mRNA selection, yielding the 30S pre-initiation complex (PIC). Upon addition of the 50S ribosomal subunit IF-1, IF-2 and IF-3 are released leaving the mature 70S translation initiation complex. The protein is Translation initiation factor IF-1 1 of Bordetella avium (strain 197N).